The following is a 225-amino-acid chain: Holliday junction branch migration complex subunit RuvA (225 aa).

A domain I region spans residues 1-68 (MIGWLQGQKV…DDGSSLFGFP (68 aa)). The segment at 69–147 (ERRERDMFRT…EFSCRDPGMS (79 aa)) is domain II. Positions 148-158 (LVDNGVIDSHQ) are flexible linker. The interval 159–225 (LKDSSLHELQ…SLRWLSQEAA (67 aa)) is domain III.

The protein belongs to the RuvA family. In terms of assembly, homotetramer. Forms an RuvA(8)-RuvB(12)-Holliday junction (HJ) complex. HJ DNA is sandwiched between 2 RuvA tetramers; dsDNA enters through RuvA and exits via RuvB. An RuvB hexamer assembles on each DNA strand where it exits the tetramer. Each RuvB hexamer is contacted by two RuvA subunits (via domain III) on 2 adjacent RuvB subunits; this complex drives branch migration. In the full resolvosome a probable DNA-RuvA(4)-RuvB(12)-RuvC(2) complex forms which resolves the HJ.

The protein localises to the cytoplasm. Functionally, the RuvA-RuvB-RuvC complex processes Holliday junction (HJ) DNA during genetic recombination and DNA repair, while the RuvA-RuvB complex plays an important role in the rescue of blocked DNA replication forks via replication fork reversal (RFR). RuvA specifically binds to HJ cruciform DNA, conferring on it an open structure. The RuvB hexamer acts as an ATP-dependent pump, pulling dsDNA into and through the RuvAB complex. HJ branch migration allows RuvC to scan DNA until it finds its consensus sequence, where it cleaves and resolves the cruciform DNA. The chain is Holliday junction branch migration complex subunit RuvA from Prochlorococcus marinus (strain MIT 9313).